A 361-amino-acid polypeptide reads, in one-letter code: tRNA/tmRNA (uracil-C(5))-methyltransferase (361 aa).

S-adenosyl-L-methionine-binding residues include Gln185, Tyr213, Asn218, Glu234, and Asp294. Catalysis depends on Cys319, which acts as the Nucleophile. Residue Glu353 is the Proton acceptor of the active site.

The protein belongs to the class I-like SAM-binding methyltransferase superfamily. RNA M5U methyltransferase family. TrmA subfamily.

It carries out the reaction uridine(54) in tRNA + S-adenosyl-L-methionine = 5-methyluridine(54) in tRNA + S-adenosyl-L-homocysteine + H(+). It catalyses the reaction uridine(341) in tmRNA + S-adenosyl-L-methionine = 5-methyluridine(341) in tmRNA + S-adenosyl-L-homocysteine + H(+). Functionally, dual-specificity methyltransferase that catalyzes the formation of 5-methyluridine at position 54 (m5U54) in all tRNAs, and that of position 341 (m5U341) in tmRNA (transfer-mRNA). The sequence is that of tRNA/tmRNA (uracil-C(5))-methyltransferase from Azotobacter vinelandii (strain DJ / ATCC BAA-1303).